The following is a 443-amino-acid chain: Cell division protein FtsA (443 aa).

It belongs to the FtsA/MreB family. As to quaternary structure, self-interacts. Interacts with FtsZ.

Its subcellular location is the cell inner membrane. Functionally, cell division protein that is involved in the assembly of the Z ring. May serve as a membrane anchor for the Z ring. The polypeptide is Cell division protein FtsA (Agrobacterium fabrum (strain C58 / ATCC 33970) (Agrobacterium tumefaciens (strain C58))).